Consider the following 260-residue polypeptide: OCIA domain-containing protein 1 (260 aa).

Positions 1–110 constitute an OCIA domain; sequence MDSPLSDGSR…MRLPNSRLGE (110 aa). Residues 146–260 are disordered; sequence DVYTDEGLNP…KNKYGDSWQD (115 aa). Positions 155–164 are enriched in polar residues; the sequence is PSRSTALNLD. Basic and acidic residues predominate over residues 205–215; it reads EDLRKKNREGY.

The protein belongs to the OCIAD1 family.

This Drosophila pseudoobscura pseudoobscura (Fruit fly) protein is OCIA domain-containing protein 1.